We begin with the raw amino-acid sequence, 637 residues long: MRSVDSLLLLGLTGLASQANAHPAKRQPNDSPLSKRGVDLDAFRLPELAKYVPQDEVPDISNARIAPSSDYTKTAEEFVKSVVGKATFRLVSDHYVGTNGVAHVRFKQTVNDIDVDNADFNVNIGADGKVFSYGNSFYTGKIPGPLVKRDTSDPVTALKSTVEVLDLPVDASDAKAEPKGDEHYTFTDTSGTVKKPEAKLVYLIDGEQNLKLTWRVETDVLDNWLLTYVDADKTEKVVGVVDYVADLATYEVYPWGVNDPSKGSRSVVEDPWNIATSEFTWISDGSANYTTTRGNNAIAQVNPSGGTAYLNNYRPSSSSLEFEYTFSTTQTDPVSYRDASITQLFYTANKYHDLLHLLGFNEAAGNFEVNNNGQGGAGNDFVILNSQDGSGTNNANFATPADGSPGRMRMYLWTYSTPRRDSSFDAGVVIHEYTHGLSNRLTGGPANAGCLSGTESGGMGEGWSDFMATAVHLGARDTRSTNHVIGDWVYNNANGIRAYPYSTSLTTNPYTYRSVNSLSGVHAVGTYWATALYEVLWNLIDKHGKNDADTPTFDSNGVPTDGKYLAMKLVIDGMALQPCNPNMVQARDAILDADVALTGGDNQCELWTGFAKRGLGTGARYSSTSRTESFALPSGVC.

Residues 1 to 21 (MRSVDSLLLLGLTGLASQANA) form the signal peptide. The propeptide occupies 22 to 246 (HPAKRQPNDS…VVGVVDYVAD (225 aa)). N-linked (GlcNAc...) asparagine glycosylation occurs at N288. Residue H431 participates in Zn(2+) binding. Residue E432 is part of the active site. H435 provides a ligand contact to Zn(2+).

The protein belongs to the peptidase M36 family. It depends on Zn(2+) as a cofactor.

The protein localises to the secreted. Its function is as follows. Secreted metalloproteinase that probably acts as a virulence factor. Cleaves Z.mays Endochitinase A (CHIA) between residues 'Gly-29' and 'Cys-30'. This is Extracellular metalloproteinase MEP (MEP) from Fusarium vanettenii (strain ATCC MYA-4622 / CBS 123669 / FGSC 9596 / NRRL 45880 / 77-13-4) (Fusarium solani subsp. pisi).